Reading from the N-terminus, the 209-residue chain is Small ribosomal subunit protein uS4 (209 aa).

The S4 RNA-binding domain occupies 98-164 (RRLDNVVYRL…LPVKNAIELN (67 aa)).

Belongs to the universal ribosomal protein uS4 family. In terms of assembly, part of the 30S ribosomal subunit. Contacts protein S5. The interaction surface between S4 and S5 is involved in control of translational fidelity.

Its function is as follows. One of the primary rRNA binding proteins, it binds directly to 16S rRNA where it nucleates assembly of the body of the 30S subunit. With S5 and S12 plays an important role in translational accuracy. The polypeptide is Small ribosomal subunit protein uS4 (Thermosipho africanus (strain TCF52B)).